The chain runs to 48 residues: Cytochrome b559 subunit beta (48 aa).

Residues 23–39 traverse the membrane as a helical segment; sequence WLAVHALAIPSVFFLGA. His27 provides a ligand contact to heme.

It belongs to the PsbE/PsbF family. In terms of assembly, heterodimer of an alpha subunit and a beta subunit. PSII is composed of 1 copy each of membrane proteins PsbA, PsbB, PsbC, PsbD, PsbE, PsbF, PsbH, PsbI, PsbJ, PsbK, PsbL, PsbM, PsbT, PsbX, PsbY, Psb30/Ycf12, peripheral proteins PsbO, CyanoQ (PsbQ), PsbU, PsbV and a large number of cofactors. It forms dimeric complexes. It depends on heme b as a cofactor.

Its subcellular location is the cellular thylakoid membrane. Functionally, this b-type cytochrome is tightly associated with the reaction center of photosystem II (PSII). PSII is a light-driven water:plastoquinone oxidoreductase that uses light energy to abstract electrons from H(2)O, generating O(2) and a proton gradient subsequently used for ATP formation. It consists of a core antenna complex that captures photons, and an electron transfer chain that converts photonic excitation into a charge separation. The polypeptide is Cytochrome b559 subunit beta (Prochlorococcus marinus (strain MIT 9515)).